The primary structure comprises 576 residues: Septation ring formation regulator EzrA (576 aa).

Topologically, residues 1–7 (MSSTVII) are extracellular. A helical transmembrane segment spans residues 8–26 (LIVVLLVILVAFYAFAILM). Over 27-576 (RKKTEDRILA…FKNKPTPDYL (550 aa)) the chain is Cytoplasmic. Coiled-coil stretches lie at residues 105–134 (RARE…VAQL), 254–305 (ENVN…FERE), and 356–402 (GYQE…IEKN).

It belongs to the EzrA family.

It is found in the cell membrane. In terms of biological role, negative regulator of FtsZ ring formation; modulates the frequency and position of FtsZ ring formation. Inhibits FtsZ ring formation at polar sites. Interacts either with FtsZ or with one of its binding partners to promote depolymerization. The polypeptide is Septation ring formation regulator EzrA (Lactococcus lactis subsp. cremoris (strain MG1363)).